A 378-amino-acid polypeptide reads, in one-letter code: Quinolinate synthase (378 aa).

The iminosuccinate site is built by His-59 and Ser-80. Residue Cys-125 coordinates [4Fe-4S] cluster. Iminosuccinate-binding positions include 151–153 and Ser-168; that span reads YAN. [4Fe-4S] cluster is bound at residue Cys-212. Iminosuccinate-binding positions include 238-240 and Thr-255; that span reads HPE. Cys-309 provides a ligand contact to [4Fe-4S] cluster.

The protein belongs to the quinolinate synthase family. Type 1 subfamily. Requires [4Fe-4S] cluster as cofactor.

It localises to the cytoplasm. It catalyses the reaction iminosuccinate + dihydroxyacetone phosphate = quinolinate + phosphate + 2 H2O + H(+). The protein operates within cofactor biosynthesis; NAD(+) biosynthesis; quinolinate from iminoaspartate: step 1/1. Its function is as follows. Catalyzes the condensation of iminoaspartate with dihydroxyacetone phosphate to form quinolinate. The chain is Quinolinate synthase from Burkholderia cenocepacia (strain HI2424).